Reading from the N-terminus, the 740-residue chain is Ion-translocating oxidoreductase complex subunit C (740 aa).

2 consecutive 4Fe-4S ferredoxin-type domains span residues 369–397 (GEPQ…QQLY) and 407–436 (KATT…VQYF). Positions 377, 380, 383, 387, 416, 419, 422, and 426 each coordinate [4Fe-4S] cluster. 2 disordered regions span residues 602 to 621 (KLEQ…PRKA) and 660 to 718 (ARAK…RKAA). A compositionally biased stretch (basic and acidic residues) spans 611-621 (KPEEQVDPRKA).

Belongs to the 4Fe4S bacterial-type ferredoxin family. RnfC subfamily. In terms of assembly, the complex is composed of six subunits: RsxA, RsxB, RsxC, RsxD, RsxE and RsxG. The cofactor is [4Fe-4S] cluster.

Its subcellular location is the cell inner membrane. Its function is as follows. Part of a membrane-bound complex that couples electron transfer with translocation of ions across the membrane. Required to maintain the reduced state of SoxR. This is Ion-translocating oxidoreductase complex subunit C from Escherichia coli O9:H4 (strain HS).